We begin with the raw amino-acid sequence, 162 residues long: Colicin V production protein (162 aa).

A helical transmembrane segment spans residues methionine 1–isoleucine 21. At arginine 22 to leucine 31 the chain is on the cytoplasmic side. The chain crosses the membrane as a helical span at residues valine 32–phenylalanine 52. Topologically, residues threonine 53–glycine 63 are periplasmic. Residues isoleucine 64–isoleucine 84 form a helical membrane-spanning segment. Topologically, residues glycine 85 to arginine 98 are cytoplasmic. The helical transmembrane segment at valine 99–phenylalanine 119 threads the bilayer. Residues leucine 120 to alanine 162 lie on the Periplasmic side of the membrane.

The protein resides in the cell inner membrane. Its function is as follows. Required for colicin V production from plasmid IncFI ColV3-K30. The sequence is that of Colicin V production protein (cvpA) from Escherichia coli (strain K12).